The primary structure comprises 2565 residues: Transformation/transcription domain-associated protein (2565 aa).

Residues S328, S749, and S775 each carry the phosphoserine modification. Residues 710 to 1087 (SEVVIKWELQ…SPMAANQTPT (378 aa)) form an interaction with TP53 region. Positions 745 to 760 (KRGLSVDSAQEVKRFR) match the Bipartite nuclear localization signal motif. K1242 is covalently cross-linked (Glycyl lysine isopeptide (Lys-Gly) (interchain with G-Cter in SUMO2)). Residues 1242–1253 (KQEPRERENSES) are compositionally biased toward basic and acidic residues. A disordered region spans residues 1242–1277 (KQEPRERENSESKEEDVEIDIELAPGDQTSTPKTKE). Residues 1391 to 1963 (VLKYLGKTHN…YFPIRTLYLT (573 aa)) form the FAT domain. Position 1766 is an N6-acetyllysine (K1766). Residues 1973–1995 (KSDSGQQQPSSAGNQSHSASDPG) form a disordered region. The segment covering 1975–1991 (DSGQQQPSSAGNQSHSA) has biased composition (polar residues). The 324-residue stretch at 2206–2529 (MPRVEIVQKH…AVTAIMTRLH (324 aa)) folds into the PI3K/PI4K catalytic domain. The interval 2212–2218 (VQKHNTA) is G-loop. The segment at 2393–2401 (HLNRLNPEM) is catalytic loop. The activation loop stretch occupies residues 2413 to 2438 (VAYFRFDINDATGDLDANRPVPFRLT). In terms of domain architecture, FATC spans 2533-2565 (QFDGGESKVNTLVAAANSLDNLCRMDPAWHPWL).

The protein belongs to the PI3/PI4-kinase family. TRA1 subfamily. As to quaternary structure, interacts with MYC, E2F1 and E2F4 transcription factors. Interacts directly with p53/TP53. Interacts with GCN5L2. Component of various HAT complexes. Component of the PCAF complex, at least composed of TADA2L/ADA2, SUPT3H, TADA3L/ADA3, TAF5L/PAF65-beta, TAF6L/PAF65-alpha, TAF10/TAFII30, TAF12/TAFII20, TAF9/TAFII31 and TRRAP. Component of the TFTC-HAT complex, at least composed of TAF5L, TAF6L, TADA3L, SUPT3H/SPT3, TAF2/TAFII150, TAF4/TAFII135, TAF5/TAFII100, GCN5L2/GCN5, TAF10 and TRRAP. Component of the NuA4 histone acetyltransferase complex which contains the catalytic subunit KAT5/TIP60 and the subunits EP400, TRRAP/PAF400, BRD8/SMAP, EPC1, DMAP1/DNMAP1, RUVBL1/TIP49, RUVBL2, ING3, actin, ACTL6A/BAF53A, MORF4L1/MRG15, MORF4L2/MRGX, MRGBP, YEATS4/GAS41, VPS72/YL1 and MEAF6. Component of the STAGA complex, at least composed of SUPT3H, GCN5L2, SUPT7L, TAF5L, TAF6L, TADA3L, TAD1L, TAF10, TAF12, TRRAP and TAF9. The STAGA core complex is associated with a subcomplex required for histone deubiquitination composed of ATXN7L3, ENY2 and USP22. Component of the BAF53 complex, at least composed of BAF53A, RUVBL1, SMARCA4/BRG1, and TRRAP, which preferentially acetylates histone H4 (and H2A) within nucleosomes. Interacts with NPAT. Interaction with TELO2 and TTI1. Component of a SWR1-like complex. Expressed in the cochlea.

The protein resides in the nucleus. Its function is as follows. Adapter protein, which is found in various multiprotein chromatin complexes with histone acetyltransferase activity (HAT), which gives a specific tag for epigenetic transcription activation. Component of the NuA4 histone acetyltransferase complex which is responsible for acetylation of nucleosomal histones H4 and H2A. Plays a central role in MYC transcription activation, and also participates in cell transformation by MYC. Required for p53/TP53-, E2F1- and E2F4-mediated transcription activation. Probably acts by linking transcription factors such as E1A, MYC or E2F1 to HAT complexes such as STAGA thereby allowing transcription activation. Probably not required in the steps following histone acetylation in processes of transcription activation. May be required for the mitotic checkpoint and normal cell cycle progression. Component of a SWR1-like complex that specifically mediates the removal of histone H2A.Z/H2AZ1 from the nucleosome. May play a role in the formation and maintenance of the auditory system. The sequence is that of Transformation/transcription domain-associated protein (Trrap) from Mus musculus (Mouse).